A 450-amino-acid chain; its full sequence is Tripartite motif-containing protein 77 (450 aa).

The RING-type zinc-finger motif lies at 15–56 (CSICTDYLTDPVTICCGHRFCSPCLCLLWEDTLTPNCCPVCR). Residues 88-131 (SAMLICRRHQEIKNLICETDRSLLCFLCSQSPRHATHKHYMTRE) form a B box-type zinc finger. Zn(2+) contacts are provided by cysteine 93, histidine 96, cysteine 115, and histidine 121. One can recognise a B30.2/SPRY domain in the interval 269 to 450 (QLSAWTITGV…LRPFICHGSK (182 aa)).

This sequence belongs to the TRIM/RBCC family.

The protein is Tripartite motif-containing protein 77 (TRIM77) of Homo sapiens (Human).